The following is a 635-amino-acid chain: Threonine--tRNA ligase (635 aa).

One can recognise a TGS domain in the interval 1–61; that stretch reads MPIITLPDGN…EKDANIAIIT (61 aa). The interval 242–533 is catalytic; sequence DHRKIGKQLD…LTEEYAGVYP (292 aa). Zn(2+) contacts are provided by Cys-333, His-384, and His-510.

This sequence belongs to the class-II aminoacyl-tRNA synthetase family. As to quaternary structure, homodimer. It depends on Zn(2+) as a cofactor.

Its subcellular location is the cytoplasm. The catalysed reaction is tRNA(Thr) + L-threonine + ATP = L-threonyl-tRNA(Thr) + AMP + diphosphate + H(+). In terms of biological role, catalyzes the attachment of threonine to tRNA(Thr) in a two-step reaction: L-threonine is first activated by ATP to form Thr-AMP and then transferred to the acceptor end of tRNA(Thr). Also edits incorrectly charged L-seryl-tRNA(Thr). The protein is Threonine--tRNA ligase of Psychromonas ingrahamii (strain DSM 17664 / CCUG 51855 / 37).